A 431-amino-acid chain; its full sequence is Histidinol dehydrogenase (431 aa).

The NAD(+) site is built by Tyr-127, Gln-189, and Asn-212. Residues Ser-237, Gln-259, and His-262 each coordinate substrate. Zn(2+) is bound by residues Gln-259 and His-262. Residues Glu-326 and His-327 each act as proton acceptor in the active site. Substrate is bound by residues His-327, Asp-360, Glu-414, and His-419. A Zn(2+)-binding site is contributed by Asp-360. Zn(2+) is bound at residue His-419.

The protein belongs to the histidinol dehydrogenase family. Zn(2+) serves as cofactor.

The enzyme catalyses L-histidinol + 2 NAD(+) + H2O = L-histidine + 2 NADH + 3 H(+). It participates in amino-acid biosynthesis; L-histidine biosynthesis; L-histidine from 5-phospho-alpha-D-ribose 1-diphosphate: step 9/9. In terms of biological role, catalyzes the sequential NAD-dependent oxidations of L-histidinol to L-histidinaldehyde and then to L-histidine. In Xanthomonas campestris pv. campestris (strain ATCC 33913 / DSM 3586 / NCPPB 528 / LMG 568 / P 25), this protein is Histidinol dehydrogenase.